We begin with the raw amino-acid sequence, 382 residues long: tRNA (guanine-N(7)-)-methyltransferase non-catalytic subunit wuho (382 aa).

The disordered stretch occupies residues 40–59 (VKDTDAGNEPNGNQTQPTPA). The span at 49–59 (PNGNQTQPTPA) shows a compositional bias: polar residues. 2 WD repeats span residues 149–190 (GHMS…ECFC) and 192–230 (GHTE…ELSK).

It belongs to the WD repeat TRM82 family. Forms a heterodimer with the catalytic subunit.

Its subcellular location is the nucleus. Its pathway is tRNA modification; N(7)-methylguanine-tRNA biosynthesis. Functionally, required for the formation of N(7)-methylguanine at position 46 (m7G46) in tRNA. In the complex, it is required to stabilize and induce conformational changes of the catalytic subunit. The chain is tRNA (guanine-N(7)-)-methyltransferase non-catalytic subunit wuho from Anopheles gambiae (African malaria mosquito).